The following is a 66-amino-acid chain: Large ribosomal subunit protein bL35 (66 aa).

The span at 1-16 shows a compositional bias: basic residues; sequence MPKQKTHRASAKRFKR. Residues 1 to 21 form a disordered region; the sequence is MPKQKTHRASAKRFKRTGSGG.

Belongs to the bacterial ribosomal protein bL35 family.

In Streptococcus pneumoniae serotype 2 (strain D39 / NCTC 7466), this protein is Large ribosomal subunit protein bL35.